The following is a 328-amino-acid chain: Ribosomal RNA small subunit methyltransferase C (328 aa).

The protein belongs to the methyltransferase superfamily. RsmC family. In terms of assembly, monomer.

It is found in the cytoplasm. It carries out the reaction guanosine(1207) in 16S rRNA + S-adenosyl-L-methionine = N(2)-methylguanosine(1207) in 16S rRNA + S-adenosyl-L-homocysteine + H(+). Specifically methylates the guanine in position 1207 of 16S rRNA in the 30S particle. This chain is Ribosomal RNA small subunit methyltransferase C, found in Pasteurella multocida (strain Pm70).